The chain runs to 185 residues: Ribonuclease M5 (185 aa).

In terms of domain architecture, Toprim spans 3–84; the sequence is KEVIVVEGRD…KHARISQSEG (82 aa). The Mg(2+) site is built by E9, D55, and D57.

The protein belongs to the ribonuclease M5 family. Mg(2+) serves as cofactor.

It is found in the cytoplasm. The catalysed reaction is Endonucleolytic cleavage of RNA, removing 21 and 42 nucleotides, respectively, from the 5'- and 3'-termini of a 5S-rRNA precursor.. Its function is as follows. Required for correct processing of both the 5' and 3' ends of 5S rRNA precursor. Cleaves both sides of a double-stranded region yielding mature 5S rRNA in one step. The polypeptide is Ribonuclease M5 (Clostridium acetobutylicum (strain ATCC 824 / DSM 792 / JCM 1419 / IAM 19013 / LMG 5710 / NBRC 13948 / NRRL B-527 / VKM B-1787 / 2291 / W)).